The sequence spans 276 residues: Dermonecrotic toxin LarSicTox-alphaIB2c (276 aa).

The active site involves His-5. Positions 25 and 27 each coordinate Mg(2+). His-41 serves as the catalytic Nucleophile. 2 cysteine pairs are disulfide-bonded: Cys-45–Cys-51 and Cys-47–Cys-190. Asp-85 contributes to the Mg(2+) binding site. Asn-253 carries N-linked (GlcNAc...) asparagine glycosylation.

It belongs to the arthropod phospholipase D family. Class II subfamily. Mg(2+) serves as cofactor. As to expression, expressed by the venom gland.

It is found in the secreted. The enzyme catalyses an N-(acyl)-sphingosylphosphocholine = an N-(acyl)-sphingosyl-1,3-cyclic phosphate + choline. It catalyses the reaction an N-(acyl)-sphingosylphosphoethanolamine = an N-(acyl)-sphingosyl-1,3-cyclic phosphate + ethanolamine. It carries out the reaction a 1-acyl-sn-glycero-3-phosphocholine = a 1-acyl-sn-glycero-2,3-cyclic phosphate + choline. The catalysed reaction is a 1-acyl-sn-glycero-3-phosphoethanolamine = a 1-acyl-sn-glycero-2,3-cyclic phosphate + ethanolamine. Functionally, dermonecrotic toxins cleave the phosphodiester linkage between the phosphate and headgroup of certain phospholipids (sphingolipid and lysolipid substrates), forming an alcohol (often choline) and a cyclic phosphate. This toxin acts on sphingomyelin (SM). It may also act on ceramide phosphoethanolamine (CPE), lysophosphatidylcholine (LPC) and lysophosphatidylethanolamine (LPE), but not on lysophosphatidylserine (LPS), and lysophosphatidylglycerol (LPG). It acts by transphosphatidylation, releasing exclusively cyclic phosphate products as second products. Induces dermonecrosis, hemolysis, increased vascular permeability, edema, inflammatory response, and platelet aggregation. The polypeptide is Dermonecrotic toxin LarSicTox-alphaIB2c (Loxosceles arizonica (Arizona brown spider)).